A 493-amino-acid chain; its full sequence is Fizzy-related protein homolog (493 aa).

Disordered stretches follow at residues 31–51, 64–88, and 105–166; these read LTPA…FIPS, INEN…GKDG, and EKVQ…SPRK. Residue T32 is modified to Phosphothreonine. Residues 32–42 show a composition bias toward polar residues; it reads TPANSPVSSPS. S36 carries the post-translational modification Phosphoserine. K69 carries the N6-acetyllysine modification. 2 stretches are compositionally biased toward basic and acidic residues: residues 76 to 86 and 106 to 126; these read KAKDATSDNGK and KVQD…EHKG. Residues S133, S138, S146, and S151 each carry the phosphoserine modification. The span at 146 to 160 shows a compositional bias: polar residues; that stretch reads SPYSLSPVSNKSQKL. K159 is modified (N6-acetyllysine). WD repeat units lie at residues 182–222, 227–266, 269–306, 311–350, 353–395, 397–438, and 441–480; these read PELQ…VTRL, VEGD…KLSM, GHTA…LQSE, GHRQ…PVQQ, EHLA…PLQC, DTGS…QVAK, and GHSY…RSTK.

This sequence belongs to the WD repeat CDC20/Fizzy family. In terms of assembly, the unphosphorylated form interacts with APC/C during mitosis. Interacts with NINL. Interacts (in complex with the anaphase promoting complex APC) with MAD2L2; inhibits FZR1-mediated APC/C activation. Interacts with SIRT2. Interacts with USP37. Interacts (via WD repeats) with MAK. Interacts with RBBP8/CtIP; this interaction leads to RBBP8 proteasomal degradation. Interacts with HECW2. Interacts with SASS6; the interaction is regulated by CENATAC and leads to SASS6 proteasomal degradation. Interacts (via N-terminus) with CCNF. Interacts with CDC6. Interacts with TK1 (via the KEN box). In terms of processing, acetylated. Deacetylated by SIRT2 at Lys-69 and Lys-159; deacetylation enhances the interaction of FZR1 with CDC27, leading to activation of anaphase promoting complex/cyclosome (APC/C). Post-translationally, following DNA damage, it is dephosphorylated by CDC14B in G2 phase, leading to its reassociation with the APC/C, and allowing an efficient G2 DNA damage checkpoint. Phosphorylated by MAK.

It participates in protein modification; protein ubiquitination. Substrate-specific adapter for the anaphase promoting complex/cyclosome (APC/C) E3 ubiquitin-protein ligase complex. Associates with the APC/C in late mitosis, in replacement of CDC20, and activates the APC/C during anaphase and telophase. The APC/C remains active in degrading substrates to ensure that positive regulators of the cell cycle do not accumulate prematurely. At the G1/S transition FZR1 is phosphorylated, leading to its dissociation from the APC/C. Following DNA damage, it is required for the G2 DNA damage checkpoint: its dephosphorylation and reassociation with the APC/C leads to the ubiquitination of PLK1, preventing entry into mitosis. Acts as an adapter for APC/C to target the DNA-end resection factor RBBP8/CtIP for ubiquitination and subsequent proteasomal degradation. Through the regulation of RBBP8/CtIP protein turnover, may play a role in DNA damage response, favoring DNA double-strand repair through error-prone non-homologous end joining (NHEJ) over error-free, RBBP8-mediated homologous recombination (HR). The polypeptide is Fizzy-related protein homolog (Fzr1) (Mus musculus (Mouse)).